A 541-amino-acid polypeptide reads, in one-letter code: Glycogen synthase (541 aa).

Lys-17 contacts ADP-alpha-D-glucose. A disordered region spans residues 497-541 (LARPASPPDTAPVGKPARRRRTTALSTTARAHPVARAAGREKIRA).

Belongs to the glycosyltransferase 1 family. Bacterial/plant glycogen synthase subfamily.

The enzyme catalyses [(1-&gt;4)-alpha-D-glucosyl](n) + ADP-alpha-D-glucose = [(1-&gt;4)-alpha-D-glucosyl](n+1) + ADP + H(+). Its pathway is glycan biosynthesis; glycogen biosynthesis. Synthesizes alpha-1,4-glucan chains using ADP-glucose. The sequence is that of Glycogen synthase from Ralstonia nicotianae (strain ATCC BAA-1114 / GMI1000) (Ralstonia solanacearum).